The primary structure comprises 322 residues: DNA-directed RNA polymerase subunit alpha (322 aa).

Residues Met1–Ile229 form an alpha N-terminal domain (alpha-NTD) region. The tract at residues Asn244–Leu322 is alpha C-terminal domain (alpha-CTD).

The protein belongs to the RNA polymerase alpha chain family. As to quaternary structure, homodimer. The RNAP catalytic core consists of 2 alpha, 1 beta, 1 beta' and 1 omega subunit. When a sigma factor is associated with the core the holoenzyme is formed, which can initiate transcription.

It carries out the reaction RNA(n) + a ribonucleoside 5'-triphosphate = RNA(n+1) + diphosphate. Functionally, DNA-dependent RNA polymerase catalyzes the transcription of DNA into RNA using the four ribonucleoside triphosphates as substrates. This Carsonella ruddii (strain PV) protein is DNA-directed RNA polymerase subunit alpha (rpoA).